Consider the following 453-residue polypeptide: MTTDTIVAQATAPGRGGVGIIRVSGKLASDVAHTLLGHLPKPRYADFCDFKAADGSVIDQGIALFFKGPNSFTGEDVLELQGHGGQVVMDMLIRAVLKVKGVRIARPGEFSEQAFMNDKLDLTQAEAIADLIDATSEQAAKSALHSLQGEFSTQVHTLVDKITNLRLYVEAAIDFPDEEVDFLSDGKIAAALYAIIDQLDEVQASAKQGSIIREGMKVVIAGRPNAGKSSLLNALAGKESAIVTDIAGTTRDVLREHIHLDGMPLHIIDTAGLRDTTDEVERIGIERAWSEIASADRVLFMVDGTDTAAVDPHEIWPDFIDRLPKAMGVTVVRNKADLTGEPLEATEEQGYSVYRISAKTGLGVDALKQHLKSLMGYQSNLEGGFIARRRHLEALEQASEHLQLGKVQLEVYLAGELLAEELRMAQQALSEITGEFTSDDLLGKIFSSFCIGK.

Arg-22, Glu-79, and Lys-119 together coordinate (6S)-5-formyl-5,6,7,8-tetrahydrofolate. In terms of domain architecture, TrmE-type G spans Gly-215–Gly-376. K(+) is bound at residue Asn-225. Residues Asn-225–Ser-230, Thr-244–Thr-250, Asp-269–Gly-272, and Asn-334–Asp-337 contribute to the GTP site. Ser-229 lines the Mg(2+) pocket. Residues Thr-244, Ile-246, and Thr-249 each coordinate K(+). Mg(2+) is bound at residue Thr-250. Position 453 (Lys-453) interacts with (6S)-5-formyl-5,6,7,8-tetrahydrofolate.

The protein belongs to the TRAFAC class TrmE-Era-EngA-EngB-Septin-like GTPase superfamily. TrmE GTPase family. As to quaternary structure, homodimer. Heterotetramer of two MnmE and two MnmG subunits. It depends on K(+) as a cofactor.

Its subcellular location is the cytoplasm. Exhibits a very high intrinsic GTPase hydrolysis rate. Involved in the addition of a carboxymethylaminomethyl (cmnm) group at the wobble position (U34) of certain tRNAs, forming tRNA-cmnm(5)s(2)U34. In Shewanella amazonensis (strain ATCC BAA-1098 / SB2B), this protein is tRNA modification GTPase MnmE.